A 227-amino-acid polypeptide reads, in one-letter code: Cytidylate kinase (227 aa).

11–19 (GPSGAGKGT) contacts ATP.

The protein belongs to the cytidylate kinase family. Type 1 subfamily.

The protein localises to the cytoplasm. The catalysed reaction is CMP + ATP = CDP + ADP. The enzyme catalyses dCMP + ATP = dCDP + ADP. This Pasteurella multocida (strain Pm70) protein is Cytidylate kinase.